The primary structure comprises 230 residues: Uracil-DNA glycosylase (230 aa).

The active-site Proton acceptor is Asp-71.

The protein belongs to the uracil-DNA glycosylase (UDG) superfamily. UNG family.

The protein resides in the cytoplasm. It catalyses the reaction Hydrolyzes single-stranded DNA or mismatched double-stranded DNA and polynucleotides, releasing free uracil.. Functionally, excises uracil residues from the DNA which can arise as a result of misincorporation of dUMP residues by DNA polymerase or due to deamination of cytosine. In Tropheryma whipplei (strain TW08/27) (Whipple's bacillus), this protein is Uracil-DNA glycosylase.